A 311-amino-acid polypeptide reads, in one-letter code: Methionyl-tRNA formyltransferase (311 aa).

110 to 113 (SLLP) lines the (6S)-5,6,7,8-tetrahydrofolate pocket.

The protein belongs to the Fmt family.

The catalysed reaction is L-methionyl-tRNA(fMet) + (6R)-10-formyltetrahydrofolate = N-formyl-L-methionyl-tRNA(fMet) + (6S)-5,6,7,8-tetrahydrofolate + H(+). Functionally, attaches a formyl group to the free amino group of methionyl-tRNA(fMet). The formyl group appears to play a dual role in the initiator identity of N-formylmethionyl-tRNA by promoting its recognition by IF2 and preventing the misappropriation of this tRNA by the elongation apparatus. This chain is Methionyl-tRNA formyltransferase, found in Streptococcus pyogenes serotype M6 (strain ATCC BAA-946 / MGAS10394).